The primary structure comprises 67 residues: UPF0253 protein VV2574 (67 aa).

Belongs to the UPF0253 family.

The sequence is that of UPF0253 protein VV2574 from Vibrio vulnificus (strain YJ016).